Consider the following 476-residue polypeptide: Cysteine--tRNA ligase (476 aa).

Residue cysteine 31 coordinates Zn(2+). The short motif at 33–43 is the 'HIGH' region element; it reads PTVYNYAHIGN. Zn(2+)-binding residues include cysteine 211, histidine 236, and glutamate 240. A 'KMSKS' region motif is present at residues 269–273; it reads KMSKS. Lysine 272 serves as a coordination point for ATP.

Belongs to the class-I aminoacyl-tRNA synthetase family. As to quaternary structure, monomer. Requires Zn(2+) as cofactor.

The protein resides in the cytoplasm. The enzyme catalyses tRNA(Cys) + L-cysteine + ATP = L-cysteinyl-tRNA(Cys) + AMP + diphosphate. The polypeptide is Cysteine--tRNA ligase (Xanthomonas oryzae pv. oryzae (strain MAFF 311018)).